The primary structure comprises 528 residues: Na(+)/H(+) antiporter NhaB (528 aa).

A run of 10 helical transmembrane segments spans residues 20–39 (WFKI…FYFN), 66–86 (PGGL…SQVL), 97–117 (LLLV…LFVF), 139–159 (AFLS…TVAV), 241–261 (IRMS…CFLV), 304–324 (AVIG…VGLI), 349–369 (EEAL…AVII), 390–410 (LVIF…VFVG), 448–468 (ATPN…APLI), and 476–496 (VWMA…AIQL).

It belongs to the NhaB Na(+)/H(+) (TC 2.A.34) antiporter family.

Its subcellular location is the cell inner membrane. The enzyme catalyses 2 Na(+)(in) + 3 H(+)(out) = 2 Na(+)(out) + 3 H(+)(in). Na(+)/H(+) antiporter that extrudes sodium in exchange for external protons. The protein is Na(+)/H(+) antiporter NhaB of Shewanella pealeana (strain ATCC 700345 / ANG-SQ1).